The sequence spans 200 residues: Lipopolysaccharide core heptose(II)-phosphate phosphatase (200 aa).

An N-terminal signal peptide occupies residues 1-25 (MLAFCRSSLKSKKYFIILLALAAIA).

The protein belongs to the phosphoglycerate mutase family. Ais subfamily.

The protein localises to the periplasm. It participates in bacterial outer membrane biogenesis; lipopolysaccharide metabolism. In terms of biological role, catalyzes the dephosphorylation of heptose(II) of the outer membrane lipopolysaccharide core. This chain is Lipopolysaccharide core heptose(II)-phosphate phosphatase, found in Escherichia coli O9:H4 (strain HS).